The primary structure comprises 218 residues: NAD(P)H-quinone oxidoreductase subunit I (218 aa).

4Fe-4S ferredoxin-type domains lie at 55–84 (GRIH…VDWV) and 95–124 (RNYS…MTEE). Positions 64, 67, 70, 74, 104, 107, 110, and 114 each coordinate [4Fe-4S] cluster. The interval 169 to 218 (MDPHDVPANQPRAGQLPAEALKSLSLQQESVQGDEGESLQDASDQDQPSG) is disordered. The segment covering 208 to 218 (QDASDQDQPSG) has biased composition (polar residues).

This sequence belongs to the complex I 23 kDa subunit family. In terms of assembly, NDH-1 is composed of at least 11 different subunits. The cofactor is [4Fe-4S] cluster.

The protein localises to the cellular thylakoid membrane. It catalyses the reaction a plastoquinone + NADH + (n+1) H(+)(in) = a plastoquinol + NAD(+) + n H(+)(out). The catalysed reaction is a plastoquinone + NADPH + (n+1) H(+)(in) = a plastoquinol + NADP(+) + n H(+)(out). Functionally, NDH-1 shuttles electrons from an unknown electron donor, via FMN and iron-sulfur (Fe-S) centers, to quinones in the respiratory and/or the photosynthetic chain. The immediate electron acceptor for the enzyme in this species is believed to be plastoquinone. Couples the redox reaction to proton translocation, and thus conserves the redox energy in a proton gradient. The chain is NAD(P)H-quinone oxidoreductase subunit I from Prochlorococcus marinus (strain MIT 9313).